The chain runs to 84 residues: U1-theraphotoxin-Hs1a (84 aa).

A signal peptide spans 1–22 (MKVTLIAILTCAAVLVLHTTAA). The propeptide occupies 23–48 (EELEESQLMEVGMPDTELAAVDEERL). 3 disulfides stabilise this stretch: Cys-51–Cys-65, Cys-55–Cys-76, and Cys-70–Cys-81.

It belongs to the neurotoxin 12 (Hwtx-2) family. 02 (Hwtx-2) subfamily. Expressed by the venom gland.

Its subcellular location is the secreted. Functionally, blocks neuromuscular transmission. Acts cooperatively to potentiate the activity of huwentoxin-I. Paralyzes locusts and kills mice following intracerebroventricular injection. This is U1-theraphotoxin-Hs1a from Cyriopagopus schmidti (Chinese bird spider).